The following is a 266-amino-acid chain: Putative carbamate hydrolase RutD (266 aa).

The AB hydrolase-1 domain occupies 14 to 238 (PVVVLSAGLG…RVEMPWGGHA (225 aa)).

Belongs to the AB hydrolase superfamily. Hydrolase RutD family.

The catalysed reaction is carbamate + 2 H(+) = NH4(+) + CO2. In terms of biological role, involved in pyrimidine catabolism. May facilitate the hydrolysis of carbamate, a reaction that can also occur spontaneously. This chain is Putative carbamate hydrolase RutD, found in Klebsiella pneumoniae (strain 342).